Reading from the N-terminus, the 62-residue chain is Large ribosomal subunit protein bL28 (62 aa).

This sequence belongs to the bacterial ribosomal protein bL28 family.

This chain is Large ribosomal subunit protein bL28, found in Aster yellows witches'-broom phytoplasma (strain AYWB).